The primary structure comprises 366 residues: GTP cyclohydrolase 1 type 2 homolog (366 aa).

Zn(2+) is bound by residues His64, His65, Asp102, His326, and Glu329.

This sequence belongs to the GTP cyclohydrolase I type 2/NIF3 family. As to quaternary structure, homohexamer.

The chain is GTP cyclohydrolase 1 type 2 homolog from Staphylococcus aureus (strain COL).